The primary structure comprises 177 residues: Nucleoside triphosphate/diphosphate phosphatase (177 aa).

The Proton donor role is filled by Arg-23. Asn-87, Asp-103, Asp-105, Asp-107, Asp-120, and Glu-123 together coordinate Mg(2+).

The protein belongs to the Ntdp family. Mg(2+) is required as a cofactor.

The catalysed reaction is a ribonucleoside 5'-triphosphate + H2O = a ribonucleoside 5'-diphosphate + phosphate + H(+). It carries out the reaction a ribonucleoside 5'-diphosphate + H2O = a ribonucleoside 5'-phosphate + phosphate + H(+). In terms of biological role, has nucleoside phosphatase activity towards nucleoside triphosphates and nucleoside diphosphates. This is Nucleoside triphosphate/diphosphate phosphatase from Enterococcus faecalis (strain ATCC 700802 / V583).